Reading from the N-terminus, the 133-residue chain is Hydrogenase maturation factor HypA (133 aa).

Histidine 2 contacts Ni(2+). Zn(2+) is bound by residues cysteine 73, cysteine 75, cysteine 105, and cysteine 108.

The protein belongs to the HypA/HybF family.

Functionally, involved in the maturation of [NiFe] hydrogenases. Required for nickel insertion into the metal center of the hydrogenase. This Methanosarcina acetivorans (strain ATCC 35395 / DSM 2834 / JCM 12185 / C2A) protein is Hydrogenase maturation factor HypA.